The primary structure comprises 859 residues: DNA mismatch repair protein MutS (859 aa).

617–624 (GPNMGGKS) contacts ATP.

Belongs to the DNA mismatch repair MutS family.

Functionally, this protein is involved in the repair of mismatches in DNA. It is possible that it carries out the mismatch recognition step. This protein has a weak ATPase activity. In Stutzerimonas stutzeri (strain A1501) (Pseudomonas stutzeri), this protein is DNA mismatch repair protein MutS.